A 155-amino-acid polypeptide reads, in one-letter code: SsrA-binding protein (155 aa).

The tract at residues 136-155 (REDLKRRQDQRDIQRAMKSY) is disordered.

The protein belongs to the SmpB family.

It localises to the cytoplasm. In terms of biological role, required for rescue of stalled ribosomes mediated by trans-translation. Binds to transfer-messenger RNA (tmRNA), required for stable association of tmRNA with ribosomes. tmRNA and SmpB together mimic tRNA shape, replacing the anticodon stem-loop with SmpB. tmRNA is encoded by the ssrA gene; the 2 termini fold to resemble tRNA(Ala) and it encodes a 'tag peptide', a short internal open reading frame. During trans-translation Ala-aminoacylated tmRNA acts like a tRNA, entering the A-site of stalled ribosomes, displacing the stalled mRNA. The ribosome then switches to translate the ORF on the tmRNA; the nascent peptide is terminated with the 'tag peptide' encoded by the tmRNA and targeted for degradation. The ribosome is freed to recommence translation, which seems to be the essential function of trans-translation. This Nostoc punctiforme (strain ATCC 29133 / PCC 73102) protein is SsrA-binding protein.